Here is a 179-residue protein sequence, read N- to C-terminus: Sperm surface protein Sp17 (179 aa).

A compositionally biased stretch (basic and acidic residues) spans histidine 72–threonine 109. Disordered stretches follow at residues histidine 72–leucine 138 and threonine 159–glutamate 179. Positions glutamate 116–glutamate 135 are enriched in acidic residues. The IQ domain occupies methionine 143–glutamate 172. A compositionally biased stretch (basic and acidic residues) spans lysine 161–threonine 170.

As to quaternary structure, homodimer. May interact with ROPN1. In terms of tissue distribution, testis- and sperm-specific.

It localises to the membrane. Its function is as follows. Sperm surface zona pellucida binding protein. Helps to bind spermatozoa to the zona pellucida with high affinity. Might function in binding zona pellucida and carbohydrates. The polypeptide is Sperm surface protein Sp17 (SPA17) (Monodelphis domestica (Gray short-tailed opossum)).